The following is a 287-amino-acid chain: Elongation factor Ts (287 aa).

The segment at 80–83 is involved in Mg(2+) ion dislocation from EF-Tu; sequence TDFL.

Belongs to the EF-Ts family.

The protein resides in the cytoplasm. Its function is as follows. Associates with the EF-Tu.GDP complex and induces the exchange of GDP to GTP. It remains bound to the aminoacyl-tRNA.EF-Tu.GTP complex up to the GTP hydrolysis stage on the ribosome. The protein is Elongation factor Ts of Pseudomonas putida (strain W619).